Here is a 148-residue protein sequence, read N- to C-terminus: Hemoglobin subunit beta (148 aa).

In terms of domain architecture, Globin spans 3–148 (DWTDAERSAI…VVSALGRQYH (146 aa)). Heme b is bound by residues His64 and His93.

It belongs to the globin family. As to quaternary structure, heterotetramer of two alpha chains and two beta chains. In terms of tissue distribution, red blood cells.

In terms of biological role, involved in oxygen transport from gills to the various peripheral tissues. This Oncorhynchus nerka (Sockeye salmon) protein is Hemoglobin subunit beta (hbb).